A 337-amino-acid chain; its full sequence is Draxin (337 aa).

The N-terminal stretch at 1-24 (MLLLALLLLLELSLAGSLGPGSSA) is a signal peptide. Disordered regions lie at residues 36–67 (GPAL…WTQD), 107–133 (RPYP…KRRK), and 234–261 (WPST…KGEP). Basic residues-rich tracts occupy residues 122 to 133 (VKKRGREHKRRK) and 237 to 246 (TRKKEKHRGK). N-linked (GlcNAc...) asparagine glycosylation occurs at N252.

It belongs to the draxin family. Interacts with LRP6.

It is found in the secreted. Chemorepulsive axon guidance protein required for the development of spinal cord and forebrain commissures. Acts as a chemorepulsive guidance protein for commissural axons during development. Able to inhibit or repel neurite outgrowth from dorsal spinal cord. Inhibits the stabilization of cytosolic beta-catenin (CTNNB1) via its interaction with LRP6, thereby acting as an antagonist of Wnt signaling pathway. The polypeptide is Draxin (Bos taurus (Bovine)).